The chain runs to 307 residues: Small ribosomal subunit biogenesis GTPase RsgA (307 aa).

The disordered stretch occupies residues 1 to 21; that stretch reads MPSEHPFSDGISTPNPKETMN. A compositionally biased stretch (polar residues) spans 10–21; sequence GISTPNPKETMN. Positions 85-242 constitute a CP-type G domain; it reads RQDAWKTKLI…LIDSPGLQEF (158 aa). Residues 135-138 and 184-192 contribute to the GTP site; these read NKAD and GQSGMGKST. 4 residues coordinate Zn(2+): C266, C271, H273, and C279.

It belongs to the TRAFAC class YlqF/YawG GTPase family. RsgA subfamily. As to quaternary structure, monomer. Associates with 30S ribosomal subunit, binds 16S rRNA. It depends on Zn(2+) as a cofactor.

It is found in the cytoplasm. Its function is as follows. One of several proteins that assist in the late maturation steps of the functional core of the 30S ribosomal subunit. Helps release RbfA from mature subunits. May play a role in the assembly of ribosomal proteins into the subunit. Circularly permuted GTPase that catalyzes slow GTP hydrolysis, GTPase activity is stimulated by the 30S ribosomal subunit. The protein is Small ribosomal subunit biogenesis GTPase RsgA of Neisseria gonorrhoeae (strain NCCP11945).